The primary structure comprises 457 residues: NADH-quinone oxidoreductase subunit N (457 aa).

Helical transmembrane passes span 2-22 (NAII…FIGL), 25-45 (LIYP…ACTF), 60-80 (NYSV…FILF), 92-112 (GDHY…VSFS), 114-134 (MSML…LAGS), 149-169 (FILG…IYGA), 188-208 (FFIG…AVPF), 222-242 (FITA…FYLM), 253-273 (YLSH…NIAA), 283-303 (LAFS…ILTI), 310-330 (FVYL…VQVV), 353-373 (AFVL…AGFF), 382-402 (VIHA…LISV), and 431-451 (VILA…DILL).

Belongs to the complex I subunit 2 family. NDH-1 is composed of 14 different subunits. Subunits NuoA, H, J, K, L, M, N constitute the membrane sector of the complex.

It is found in the cell inner membrane. The enzyme catalyses a quinone + NADH + 5 H(+)(in) = a quinol + NAD(+) + 4 H(+)(out). Its function is as follows. NDH-1 shuttles electrons from NADH, via FMN and iron-sulfur (Fe-S) centers, to quinones in the respiratory chain. The immediate electron acceptor for the enzyme in this species is believed to be a menaquinone. Couples the redox reaction to proton translocation (for every two electrons transferred, four hydrogen ions are translocated across the cytoplasmic membrane), and thus conserves the redox energy in a proton gradient. This is NADH-quinone oxidoreductase subunit N from Cytophaga hutchinsonii (strain ATCC 33406 / DSM 1761 / CIP 103989 / NBRC 15051 / NCIMB 9469 / D465).